The chain runs to 352 residues: DNA integrity scanning protein DisA (352 aa).

A DAC domain is found at 3–143 (DERIVLALKS…FKYSLSEVSV (141 aa)). ATP is bound by residues Gly70, Leu88, and 101–105 (IRHRT).

The protein belongs to the DisA family. Homooctamer. It depends on Mg(2+) as a cofactor.

The enzyme catalyses 2 ATP = 3',3'-c-di-AMP + 2 diphosphate. Its function is as follows. Participates in a DNA-damage check-point that is active prior to asymmetric division when DNA is damaged. DisA forms globular foci that rapidly scan along the chromosomes during sporulation, searching for lesions. When a lesion is present, DisA pauses at the lesion site. This triggers a cellular response that culminates in a temporary block in sporulation initiation. In terms of biological role, also has diadenylate cyclase activity, catalyzing the condensation of 2 ATP molecules into cyclic di-AMP (c-di-AMP). c-di-AMP acts as a signaling molecule that couples DNA integrity with progression of sporulation. The rise in c-di-AMP level generated by DisA while scanning the chromosome, operates as a positive signal that advances sporulation; upon encountering a lesion, the DisA focus arrests at the damaged site and halts c-di-AMP synthesis. The polypeptide is DNA integrity scanning protein DisA (Carboxydothermus hydrogenoformans (strain ATCC BAA-161 / DSM 6008 / Z-2901)).